The chain runs to 242 residues: D-proline reductase subunit gamma (242 aa).

The Nucleophile role is filled by Sec152. Position 152 (Sec152) is a non-standard amino acid, selenocysteine.

As to quaternary structure, consists of 3 subunits of 23, 26 and 45 kDa (alpha, gamma and beta respectively). The molecular weight of the complex is approximately 870 kDa, suggesting a decameric structure, if all 3 subunits are present in equal stoichiometry. In terms of processing, this subunit is carbonylated in vitro on an unidentified residue.

The protein localises to the cytoplasm. It carries out the reaction [PrdC protein]-Se-L-selenocysteinyl-S-L-cysteine + 5-aminopentanoate = [PrdC protein]-L-selenocysteine/L-cysteine + D-proline. In terms of biological role, D-proline reductase catalyzes the reductive cleavage of a C-N bond in D-proline resulting in the formation of 5-aminovalerate. The alpha subunit has been shown to bind D-proline, presumably via the pyruvoyl group. The polypeptide is D-proline reductase subunit gamma (prdB) (Acetoanaerobium sticklandii (strain ATCC 12662 / DSM 519 / JCM 1433 / CCUG 9281 / NCIMB 10654 / HF) (Clostridium sticklandii)).